The chain runs to 397 residues: Formate-dependent phosphoribosylglycinamide formyltransferase (397 aa).

N(1)-(5-phospho-beta-D-ribosyl)glycinamide-binding positions include 21-22 (EL) and Glu81. Residues Arg113, Lys154, 194 to 197 (EEYV), and Glu202 each bind ATP. One can recognise an ATP-grasp domain in the interval 118 to 313 (KLAAEKVKVP…EFQIHVRSAL (196 aa)). Residues Glu272 and Glu284 each coordinate Mg(2+). N(1)-(5-phospho-beta-D-ribosyl)glycinamide is bound by residues Asp291, Lys361, and 368 to 369 (RR).

It belongs to the PurK/PurT family. Homodimer.

The catalysed reaction is N(1)-(5-phospho-beta-D-ribosyl)glycinamide + formate + ATP = N(2)-formyl-N(1)-(5-phospho-beta-D-ribosyl)glycinamide + ADP + phosphate + H(+). It participates in purine metabolism; IMP biosynthesis via de novo pathway; N(2)-formyl-N(1)-(5-phospho-D-ribosyl)glycinamide from N(1)-(5-phospho-D-ribosyl)glycinamide (formate route): step 1/1. Functionally, involved in the de novo purine biosynthesis. Catalyzes the transfer of formate to 5-phospho-ribosyl-glycinamide (GAR), producing 5-phospho-ribosyl-N-formylglycinamide (FGAR). Formate is provided by PurU via hydrolysis of 10-formyl-tetrahydrofolate. This chain is Formate-dependent phosphoribosylglycinamide formyltransferase, found in Sulfurisphaera tokodaii (strain DSM 16993 / JCM 10545 / NBRC 100140 / 7) (Sulfolobus tokodaii).